The sequence spans 71 residues: UPF0346 protein str0441 (71 aa).

This sequence belongs to the UPF0346 family.

The polypeptide is UPF0346 protein str0441 (Streptococcus thermophilus (strain CNRZ 1066)).